An 871-amino-acid chain; its full sequence is Envelope glycoprotein gp160 (871 aa).

Residues 1–21 (MKNLIGITLILIITILGIGFS) form the signal peptide. Residues 22–684 (TYYTTVFYGV…DITQWLWYIK (663 aa)) are Extracellular-facing. Cysteines 43 and 63 form a disulfide. N-linked (GlcNAc...) asparagine; by host glycosylation is found at Asn77, Asn124, Asn127, Asn142, Asn153, Asn157, Asn185, Asn194, Asn229, Asn238, Asn259, Asn273, Asn285, Asn289, Asn297, Asn329, Asn345, Asn352, Asn384, Asn387, Asn395, Asn398, Asn438, Asn451, and Asn496. 5 cysteine pairs are disulfide-bonded: Cys108–Cys202, Cys115–Cys193, Cys120–Cys154, Cys215–Cys244, and Cys225–Cys236. Positions 120–153 (CTMTNTTNKTLNSATTTLTPTVNLSSIPNYEVYN) are V1. A V2 region spans residues 154–193 (CSFNQTTEFRDKKKQIYSLFYREDIVKEDGNNNSYYLHNC). Residues 292 to 325 (CERTGNNTRGQVQIGPGMTFYNIENVVGDTRKAY) form a V3 region. Residues Cys292 and Cys326 are joined by a disulfide bond. 2 disulfide bridges follow: Cys376–Cys435 and Cys383–Cys408. The interval 383 to 408 (CNLTNWTNTWTANRTNNTHGTLVAPC) is V4. Residues 451–458 (NNSYTPQF) are V5. A fusion peptide region spans residues 502-522 (RDVGIGLLFLGFLSAAGSTMG). An immunosuppression region spans residues 567-583 (LQARMLAVEKYIRDQQL). N-linked (GlcNAc...) asparagine; by host glycosylation is found at Asn602, Asn613, Asn626, and Asn638. Residues 645 to 668 (SLLEKAQTQQEKNKQELLELDKWS) adopt a coiled-coil conformation. Residues 663-684 (ELDKWSSLWDWFDITQWLWYIK) form an MPER; binding to GalCer region. A helical membrane pass occupies residues 685–705 (IAIIIVAGLVGLRILMFIVNV). The Cytoplasmic segment spans residues 706–871 (VKQVRQGYTP…IRQGLELALN (166 aa)). The YXXL motif; contains endocytosis signal signature appears at 713-716 (YTPL).

The mature envelope protein (Env) consists of a homotrimer of non-covalently associated gp120-gp41 heterodimers. The resulting complex protrudes from the virus surface as a spike. Interacts with host CD4 and CCR5. Gp120 also interacts with the C-type lectins CD209/DC-SIGN and CLEC4M/DC-SIGNR (collectively referred to as DC-SIGN(R)). As to quaternary structure, the mature envelope protein (Env) consists of a homotrimer of non-covalently associated gp120-gp41 heterodimers. The resulting complex protrudes from the virus surface as a spike. In terms of processing, specific enzymatic cleavages in vivo yield mature proteins. Envelope glycoproteins are synthesized as an inactive precursor that is heavily N-glycosylated and processed likely by host cell furin in the Golgi to yield the mature SU and TM proteins. The cleavage site between SU and TM requires the minimal sequence [KR]-X-[KR]-R.

It is found in the virion membrane. Its subcellular location is the host cell membrane. The protein localises to the host endosome membrane. Functionally, the surface protein gp120 (SU) attaches the virus to the host lymphoid cell by binding to the primary receptor CD4. This interaction induces a structural rearrangement creating a high affinity binding site for a chemokine coreceptor like CCR5. This peculiar 2 stage receptor-interaction strategy allows gp120 to maintain the highly conserved coreceptor-binding site in a cryptic conformation, protected from neutralizing antibodies. These changes are transmitted to the transmembrane protein gp41 and are thought to activate its fusogenic potential by unmasking its fusion peptide. In terms of biological role, surface protein gp120 (SU) may target the virus to gut-associated lymphoid tissue (GALT) by binding host ITGA4/ITGB7 (alpha-4/beta-7 integrins), a complex that mediates T-cell migration to the GALT. Interaction between gp120 and ITGA4/ITGB7 would allow the virus to enter GALT early in the infection, infecting and killing most of GALT's resting CD4+ T-cells. This T-cell depletion is believed to be the major insult to the host immune system leading to AIDS. The surface protein gp120 is a ligand for CD209/DC-SIGN and CLEC4M/DC-SIGNR, which are respectively found on dendritic cells (DCs), and on endothelial cells of liver sinusoids and lymph node sinuses. These interactions allow capture of viral particles at mucosal surfaces by these cells and subsequent transmission to permissive cells. DCs are professional antigen presenting cells, critical for host immunity by inducing specific immune responses against a broad variety of pathogens. They act as sentinels in various tissues where they take up antigen, process it, and present it to T-cells following migration to lymphoid organs. SIV subverts the migration properties of dendritic cells to gain access to CD4+ T-cells in lymph nodes. Virus transmission to permissive T-cells occurs either in trans (without DCs infection, through viral capture and transmission), or in cis (following DCs productive infection, through the usual CD4-gp120 interaction), thereby inducing a robust infection. In trans infection, bound virions remain infectious over days and it is proposed that they are not degraded, but protected in non-lysosomal acidic organelles within the DCs close to the cell membrane thus contributing to the viral infectious potential during DCs' migration from the periphery to the lymphoid tissues. On arrival at lymphoid tissues, intact virions recycle back to DCs' cell surface allowing virus transmission to CD4+ T-cells. Virion capture also seems to lead to MHC-II-restricted viral antigen presentation, and probably to the activation of SIV-specific CD4+ cells. Its function is as follows. The transmembrane protein gp41 (TM) acts as a class I viral fusion protein. Under the current model, the protein has at least 3 conformational states: pre-fusion native state, pre-hairpin intermediate state, and post-fusion hairpin state. During fusion of viral and target intracellular membranes, the coiled coil regions (heptad repeats) assume a trimer-of-hairpins structure, positioning the fusion peptide in close proximity to the C-terminal region of the ectodomain. The formation of this structure appears to drive apposition and subsequent fusion of viral and target cell membranes. Complete fusion occurs in host cell endosomes. The virus undergoes clathrin-dependent internalization long before endosomal fusion, thus minimizing the surface exposure of conserved viral epitopes during fusion and reducing the efficacy of inhibitors targeting these epitopes. Membranes fusion leads to delivery of the nucleocapsid into the cytoplasm. Functionally, the envelope glycoprotein gp160 precursor down-modulates cell surface CD4 antigen by interacting with it in the endoplasmic reticulum and blocking its transport to the cell surface. In terms of biological role, the gp120-gp41 heterodimer allows rapid transcytosis of the virus through CD4 negative cells such as simple epithelial monolayers of the intestinal, rectal and endocervical epithelial barriers. Both gp120 and gp41 specifically recognize glycosphingolipids galactosyl-ceramide (GalCer) or 3' sulfo-galactosyl-ceramide (GalS) present in the lipid rafts structures of epithelial cells. Binding to these alternative receptors allows the rapid transcytosis of the virus through the epithelial cells. This transcytotic vesicle-mediated transport of virions from the apical side to the basolateral side of the epithelial cells does not involve infection of the cells themselves. The protein is Envelope glycoprotein gp160 of Simian immunodeficiency virus (isolate TAN1) (SIV-cpz).